The sequence spans 113 residues: MHEMSLAVAAIDLAAEQATQRGFNKVTALWLEVGSFSCVDPDTIAFCFEAAAKGTVVEGAQLHFQHQAAEAWCYDCDKTVTLTERGQACPECGGYKLRVAQGDSLRITDIEVS.

A Ni(2+)-binding site is contributed by H2. Residues C73, C76, C89, and C92 each contribute to the Zn(2+) site.

This sequence belongs to the HypA/HybF family.

In terms of biological role, involved in the maturation of [NiFe] hydrogenases. Required for nickel insertion into the metal center of the hydrogenase. The polypeptide is Hydrogenase maturation factor HypA (Aeromonas salmonicida (strain A449)).